A 1018-amino-acid polypeptide reads, in one-letter code: Cell wall protein 1 (1018 aa).

The N-terminal stretch at 1 to 17 is a signal peptide; that stretch reads MLPSIVISIVLASFVSA. A CFEM 1 domain is found at 32–143; that stretch reads NPYTIYPSVA…SSLSAAATAV (112 aa). Disulfide bonds link C60–C100, C64–C95, C74–C81, and C83–C116. Residue D78 participates in heme binding. Positions 147–227 are disordered; sequence SEQPVETSSE…STPEDNPYTI (81 aa). Over residues 148-164 the composition is skewed to polar residues; it reads EQPVETSSEPAGSSQSV. Positions 165 to 221 are enriched in low complexity; the sequence is ESSQPAETSSSEPAETSSSEPAETSSETSSEQPASSEPAETSSEESSTITSAPSTPE. CFEM domains follow at residues 223 to 334 and 393 to 504; these read NPYT…ATAV and SSSS…ATAV. 4 disulfides stabilise this stretch: C251–C291, C255–C286, C265–C272, and C274–C307. Position 269 (D269) interacts with heme. The disordered stretch occupies residues 338–396; it reads SEQSVETSSESAESSQSVESSQPAETSSEQPSETSSETSSQQLSSITSAPDSSATSSSS. 4 cysteine pairs are disulfide-bonded: C421–C461, C425–C456, C435–C442, and C444–C477. A heme-binding site is contributed by D439. A disordered region spans residues 507 to 557; the sequence is SDSASETASQEPSETSSEQPSETASQQPAETSSEESSTITSAPSTPEDNPY. Residues 509–553 are compositionally biased toward low complexity; that stretch reads SASETASQEPSETSSEQPSETASQQPAETSSEESSTITSAPSTPE. The 112-residue stretch at 555–666 folds into the CFEM 4 domain; the sequence is NPYTIYPSVA…SSLNAAATAV (112 aa). Cystine bridges form between C583-C623, C587-C618, C597-C604, and C606-C639. D601 serves as a coordination point for heme. The tract at residues 677 to 785 is disordered; the sequence is SASESASQVP…STSTKSDAAS (109 aa). Positions 690–766 are enriched in low complexity; sequence SAASSQSANN…AISESVAPSS (77 aa). N698, N708, N718, N729, N743, N753, N769, N798, and N965 each carry an N-linked (GlcNAc...) asparagine glycan. Over residues 767-785 the composition is skewed to polar residues; that stretch reads YGNSTIAQPSTSTKSDAAS. Residue S989 is the site of GPI-anchor amidated serine attachment. Positions 990 to 1018 are cleaved as a propeptide — removed in mature form; sequence VAIANMANTKFASTMSLLVASFVFVGLFI.

It belongs to the RBT5 family. In terms of processing, the GPI-anchor is attached to the protein in the endoplasmic reticulum and serves to target the protein to the cell surface. There, the glucosamine-inositol phospholipid moiety is cleaved off and the GPI-modified mannoprotein is covalently attached via its lipidless GPI glycan remnant to the 1,6-beta-glucan of the outer cell wall layer.

The protein localises to the secreted. It localises to the cell wall. Its subcellular location is the membrane. In terms of biological role, heme-binding protein involved in heme-iron utilization. The ability to acquire iron from host tissues is a major virulence factor of pathogenic microorganisms. Required for biofilm formation. The polypeptide is Cell wall protein 1 (CSA1) (Candida albicans (strain SC5314 / ATCC MYA-2876) (Yeast)).